A 1706-amino-acid chain; its full sequence is Bifunctional hemolysin/adenylate cyclase (1706 aa).

Positions 1-399 (MQQSHQAGYA…RRPSLGAVER (399 aa)) are a, catalytic. 349–356 (AYGVAGKS) contributes to the ATP binding site. Residues 367-405 (GVPGGRSKSSPDVLETVPASPGLRRPSLGAVERQDSGYD) form a disordered region. The b, Ala/Gly-rich stretch occupies residues 400–912 (QDSGYDSLDG…LKHSIKLEVI (513 aa)). The interval 500–698 (LSAAVFGLGE…SVVGAPVAVV (199 aa)) is required for interaction with CyaC. 2 N6-palmitoyl lysine lipidation sites follow: lysine 860 and lysine 983. The c stretch occupies residues 913–1656 (GGDGDDVVLA…RDADHRVEAI (744 aa)). Hemolysin-type calcium-binding repeat units follow at residues 1014 to 1031 (IGGAGNDSITGNAHDNFL), 1032 to 1049 (AGGAGDDRLDGGAGNDTL), 1050 to 1067 (VGGEGHNTVVGGAGDDVF), 1155 to 1172 (WGDDGNDTIHGRGGDDIL), 1173 to 1190 (RGGLGLDTLYGEDGNDIF), 1279 to 1296 (MGQGGDDTVRGGDGDDLL), 1297 to 1314 (FGGDGNDMLYGDAGNDTL), 1315 to 1332 (YGGLGDDTLEGGAGNDWF), 1335 to 1352 (TPAREHDVLRGGAGVDTV), 1411 to 1428 (TGDAQANVLRGAGGADVL), 1429 to 1446 (AGGEGDDVLLGGDGDDQL), 1447 to 1464 (SGDAGRDRLYGEAGDDWF), 1468 to 1484 (AANAGNLLDGGDGNDTV), 1537 to 1554 (IGDAGANVLNGLAGNDVL), 1555 to 1572 (SGGAGDDVLLGDEGSDLL), 1573 to 1590 (SGDAGNDDLFGGQGDDTY), and 1603 to 1620 (ESGGGHDTIRINAGADQL). The tract at residues 1657–1706 (HAANQAIDPAGIEKLVEAMAQYPDPGAAAAAPPAARVPDTLMQSLAVNWR) is d, Asp/Gly-rich.

This sequence in the N-terminal section; belongs to the adenylyl cyclase class-2 family. The protein in the C-terminal section; belongs to the RTX prokaryotic toxin family. In terms of processing, released in a processed form. Post-translationally, palmitoylated at Lys-860 and Lys-983 by CyaC. The toxin only becomes active when modified in position Lys-983: palmitoylation is required for efficient membrane insertion and pore formation of the acylated Hemolysin chain.

It is found in the secreted. The protein localises to the host cell membrane. The catalysed reaction is ATP = 3',5'-cyclic AMP + diphosphate. Its activity is regulated as follows. Activated by host calmodulin. Functionally, bifunctional adenylate cyclase toxin-hemolysin that plays a crucial role in host colonization. It causes whooping cough by acting on mammalian cells by elevating cAMP-concentration and thus disrupts normal cell function. Its function is as follows. Adenylate cyclase that is activated by host intracellular calmodulin and catalyzes un-regulated conversion of ATP to cAMP, thereby impairing microbicidal functions of immune effector cells and inducing apoptosis of lung macrophages. In terms of biological role, hemolysin that forms small cation-selective membrane channels, leading to hemolytic activity. The hemolytic activity of CyaA is weak compared with that of the HlyA of E.coli. The chain is Bifunctional hemolysin/adenylate cyclase (cya) from Bordetella bronchiseptica (strain ATCC BAA-588 / NCTC 13252 / RB50) (Alcaligenes bronchisepticus).